Consider the following 89-residue polypeptide: Small ribosomal subunit protein uS15 (89 aa).

It belongs to the universal ribosomal protein uS15 family. As to quaternary structure, part of the 30S ribosomal subunit. Forms a bridge to the 50S subunit in the 70S ribosome, contacting the 23S rRNA.

One of the primary rRNA binding proteins, it binds directly to 16S rRNA where it helps nucleate assembly of the platform of the 30S subunit by binding and bridging several RNA helices of the 16S rRNA. Its function is as follows. Forms an intersubunit bridge (bridge B4) with the 23S rRNA of the 50S subunit in the ribosome. The protein is Small ribosomal subunit protein uS15 of Nitrosococcus oceani (strain ATCC 19707 / BCRC 17464 / JCM 30415 / NCIMB 11848 / C-107).